The chain runs to 336 residues: Fructose-1,6-bisphosphatase class 1 (336 aa).

The Mg(2+) site is built by E90, D112, L114, and D115. Substrate is bound by residues 115-118 (DGSS), N211, and K277. Residue E283 coordinates Mg(2+).

It belongs to the FBPase class 1 family. Homotetramer. Mg(2+) serves as cofactor.

Its subcellular location is the cytoplasm. The enzyme catalyses beta-D-fructose 1,6-bisphosphate + H2O = beta-D-fructose 6-phosphate + phosphate. Its pathway is carbohydrate biosynthesis; gluconeogenesis. The sequence is that of Fructose-1,6-bisphosphatase class 1 from Pseudomonas syringae pv. syringae (strain B728a).